The primary structure comprises 491 residues: Probable cytosol aminopeptidase (491 aa).

Residues lysine 263 and aspartate 268 each contribute to the Mn(2+) site. Lysine 275 is a catalytic residue. Residues aspartate 286, aspartate 345, and glutamate 347 each contribute to the Mn(2+) site. The active site involves arginine 349.

It belongs to the peptidase M17 family. Requires Mn(2+) as cofactor.

The protein resides in the cytoplasm. It catalyses the reaction Release of an N-terminal amino acid, Xaa-|-Yaa-, in which Xaa is preferably Leu, but may be other amino acids including Pro although not Arg or Lys, and Yaa may be Pro. Amino acid amides and methyl esters are also readily hydrolyzed, but rates on arylamides are exceedingly low.. The catalysed reaction is Release of an N-terminal amino acid, preferentially leucine, but not glutamic or aspartic acids.. Its function is as follows. Presumably involved in the processing and regular turnover of intracellular proteins. Catalyzes the removal of unsubstituted N-terminal amino acids from various peptides. This Haemophilus influenzae (strain PittGG) protein is Probable cytosol aminopeptidase.